We begin with the raw amino-acid sequence, 201 residues long: Pyridoxal 5'-phosphate synthase subunit PdxT (201 aa).

Glycine 51–serine 53 is a binding site for L-glutamine. Residue cysteine 83 is the Nucleophile of the active site. Residues arginine 112 and isoleucine 141–arginine 142 each bind L-glutamine. Catalysis depends on charge relay system residues histidine 182 and glutamate 184.

It belongs to the glutaminase PdxT/SNO family. As to quaternary structure, in the presence of PdxS, forms a dodecamer of heterodimers. Only shows activity in the heterodimer.

The catalysed reaction is aldehydo-D-ribose 5-phosphate + D-glyceraldehyde 3-phosphate + L-glutamine = pyridoxal 5'-phosphate + L-glutamate + phosphate + 3 H2O + H(+). It catalyses the reaction L-glutamine + H2O = L-glutamate + NH4(+). It functions in the pathway cofactor biosynthesis; pyridoxal 5'-phosphate biosynthesis. Catalyzes the hydrolysis of glutamine to glutamate and ammonia as part of the biosynthesis of pyridoxal 5'-phosphate. The resulting ammonia molecule is channeled to the active site of PdxS. This Thermobifida fusca (strain YX) protein is Pyridoxal 5'-phosphate synthase subunit PdxT.